Here is a 249-residue protein sequence, read N- to C-terminus: MIYTSSKSLQYLAVPIYTIFKNLTIILIAYGEVLFFGGKVTSMELTSFIMMVLSSVVATWGDQQAIAIKASSLEDLDQELVESTIFVLNPGYLWMFTNCISSALFVLIMRKRIRLTNFKDYDTMFYNNVLALPLLLVFSFIMEDWSTKNLSVNLSADSLAAMVISGLMSVGISYCSGWCVRVTSSTTYSMVGALNKLPIALAGLVFFDAPKNFLSFFSIFLGFLSGLLYAVAKQKKIQQQKVLAATLEK.

Topologically, residues 1-15 (MIYTSSKSLQYLAVP) are lumenal. A helical transmembrane segment spans residues 16–36 (IYTIFKNLTIILIAYGEVLFF). Residues 37–47 (GGKVTSMELTS) are Cytoplasmic-facing. A helical membrane pass occupies residues 48–68 (FIMMVLSSVVATWGDQQAIAI). Residues 69–84 (KASSLEDLDQELVEST) lie on the Lumenal side of the membrane. Residues 85 to 105 (IFVLNPGYLWMFTNCISSALF) traverse the membrane as a helical segment. Residues 106-122 (VLIMRKRIRLTNFKDYD) are Cytoplasmic-facing. Residues 123–143 (TMFYNNVLALPLLLVFSFIME) traverse the membrane as a helical segment. Over 144-159 (DWSTKNLSVNLSADSL) the chain is Lumenal. 2 N-linked (GlcNAc...) asparagine glycosylation sites follow: asparagine 149 and asparagine 153. Residues 160–180 (AAMVISGLMSVGISYCSGWCV) traverse the membrane as a helical segment. At 181-186 (RVTSST) the chain is on the cytoplasmic side. A helical transmembrane segment spans residues 187 to 207 (TYSMVGALNKLPIALAGLVFF). Residues 208–211 (DAPK) lie on the Lumenal side of the membrane. A helical membrane pass occupies residues 212–232 (NFLSFFSIFLGFLSGLLYAVA). Over 233-249 (KQKKIQQQKVLAATLEK) the chain is Cytoplasmic.

The protein belongs to the TPT transporter family. SLC35D subfamily.

The protein localises to the golgi apparatus membrane. The protein resides in the cytoplasmic vesicle membrane. It localises to the endoplasmic reticulum membrane. Functionally, involved in the import of GDP-mannose from the cytoplasm into the Golgi lumen. This Saccharomyces cerevisiae (strain RM11-1a) (Baker's yeast) protein is Probable GDP-mannose transporter 2 (HVG1).